A 526-amino-acid chain; its full sequence is Protein MGF 505-2R (526 aa).

Belongs to the asfivirus MGF 505 family.

Functionally, plays a role in virus cell tropism, and may be required for efficient virus replication in macrophages. This is Protein MGF 505-2R from African swine fever virus (isolate Pig/Kenya/KEN-50/1950) (ASFV).